The sequence spans 677 residues: mRNA export factor Gle1 (677 aa).

The segment covering 34–48 (EDREPIWVEGSRKTP) has biased composition (basic and acidic residues). Disordered stretches follow at residues 34–65 (EDRE…NNEI), 113–136 (KQDA…DQLQ), and 294–366 (ERQR…ATST). The span at 49–60 (EPPLPEESPAPE) shows a compositional bias: pro residues. 2 coiled-coil regions span residues 122 to 179 (ETQQ…QKLH) and 280 to 346 (QQQL…AANV). Residues 294–340 (ERQRQQQQEEERQKLEEQQKLEEQEKLRKEKEESAAKEKQQEAETAK) are compositionally biased toward basic and acidic residues.

The protein belongs to the GLE1 family. In terms of assembly, may associate with the NPC.

Its subcellular location is the cytoplasm. It is found in the nucleus. The protein localises to the nuclear pore complex. Required for the export of mRNAs containing poly(A) tails from the nucleus into the cytoplasm. May be involved in the terminal step of the mRNA transport through the nuclear pore complex (NPC). In Drosophila melanogaster (Fruit fly), this protein is mRNA export factor Gle1.